Reading from the N-terminus, the 544-residue chain is MSSYSYDPYYTPYKRRVVESSPRVHIRSSYVSPSRTTYSPLVSTTMRRSYATSSSSSFLPSVDTMDLSQVAAISSDLKIVRTQEKVQLQDLNDRFANFIERVHELEQRNKVLEAELLLLRQKHNEPSRLRDMYEKEVRDVRLAQEEASGDRQTLRNERERLEDALRVLQGRYEEEAMSREDSEARLLDVRKEADMAALARVELEKRMDSLLDEIAFLKKVHEEELSQLQSQVQYAQVSLEVEVAKPDLSSALRDIRGQYEKLAAKNMQSAEEWFKSRFTVLTQSAARNTDAVRAAKDEMSESRRMLSAKGLEIEACRGVNEALQRQIQELEDKQSGEIAGMQDAINKLEEELRNTKSEMARYLKEYQDLLNVKMALDIEIAAYRKLLEGEETRLSFSGVGAITSGYTQSAPVFGRSAYSLQSSSYMTSRAFPTYYSSHVQEEQLDIEETIESSRAEEAKAEAPEEEEEEAAEEEGEGGEEAEEEGEEGEEAKEEEAEEEGGQEKEEEGEEGEGEAEAEGDGEEEGESKGDEAAEEESEKKEKKK.

An N-acetylserine modification is found at Ser-2. A head region spans residues 2 to 87 (SSYSYDPYYT…KIVRTQEKVQ (86 aa)). In terms of domain architecture, IF rod spans 84–394 (EKVQLQDLND…KLLEGEETRL (311 aa)). The tract at residues 88 to 119 (LQDLNDRFANFIERVHELEQRNKVLEAELLLL) is coil 1A. The tract at residues 120-132 (RQKHNEPSRLRDM) is linker 1. Residues 133–228 (YEKEVRDVRL…KVHEEELSQL (96 aa)) form a coil 1B region. Residues 229-246 (QSQVQYAQVSLEVEVAKP) form a linker 12 region. Positions 247–265 (DLSSALRDIRGQYEKLAAK) are coil 2A. The linker 2 stretch occupies residues 266-274 (NMQSAEEWF). A coil 2B region spans residues 275–390 (KSRFTVLTQS…AAYRKLLEGE (116 aa)). Residues 391–435 (ETRLSFSGVGAITSGYTQSAPVFGRSAYSLQSSSYMTSRAFPTYY) are tail, subdomain A. Positions 391–544 (ETRLSFSGVG…EESEKKEKKK (154 aa)) are tail. Residues 436–544 (SSHVQEEQLD…EESEKKEKKK (109 aa)) form a tail, subdomain B (acidic) region. The interval 450 to 544 (IESSRAEEAK…EESEKKEKKK (95 aa)) is disordered. The span at 451–462 (ESSRAEEAKAEA) shows a compositional bias: basic and acidic residues. The span at 463-525 (PEEEEEEAAE…EAEGDGEEEG (63 aa)) shows a compositional bias: acidic residues. Residues 526–544 (ESKGDEAAEEESEKKEKKK) show a composition bias toward basic and acidic residues.

This sequence belongs to the intermediate filament family. In terms of assembly, forms homodimers (in vitro).

Its subcellular location is the cell projection. It localises to the axon. The protein resides in the cytoplasm. It is found in the cytoskeleton. In terms of biological role, neurofilaments usually contain three intermediate filament proteins: NEFL, NEFM, and NEFH which are involved in the maintenance of neuronal caliber. May additionally cooperate with other neuronal intermediate filament proteins to form neuronal filamentous networks. The sequence is that of Neurofilament light polypeptide (nefl) from Xenopus laevis (African clawed frog).